A 581-amino-acid chain; its full sequence is ATP-dependent lipid A-core flippase (581 aa).

5 consecutive transmembrane segments (helical) span residues 15 to 35, 62 to 82, 152 to 172, 252 to 272, and 274 to 294; these read LWPI…ALII, ISIW…SSGF, IIGL…VLII, IIIQ…SSLP, and IIDE…IALM. One can recognise an ABC transmembrane type-1 domain in the interval 27–309; it reads IISIVALIIN…LTNVNANFQK (283 aa). The 237-residue stretch at 341–577 folds into the ABC transporter domain; it reads IKFKNITFTY…KGVYAQIYRL (237 aa). 375 to 382 contacts ATP; the sequence is GSSGAGKS.

The protein belongs to the ABC transporter superfamily. Lipid exporter (TC 3.A.1.106) family. Homodimer.

It is found in the cell membrane. It catalyses the reaction ATP + H2O + lipid A-core oligosaccharideSide 1 = ADP + phosphate + lipid A-core oligosaccharideSide 2.. Its function is as follows. Involved in lipopolysaccharide (LPS) biosynthesis. Translocates lipid A-core from the inner to the outer leaflet of the inner membrane. Transmembrane domains (TMD) form a pore in the inner membrane and the ATP-binding domain (NBD) is responsible for energy generation. This Wigglesworthia glossinidia brevipalpis protein is ATP-dependent lipid A-core flippase.